The primary structure comprises 635 residues: Extracellular metalloproteinase MEP (635 aa).

A signal peptide spans 1–19 (MRYSLSLALLGVAAVTVVA). Residues 20–242 (HPHTPGRHGV…VHGVVDYVSH (223 aa)) constitute a propeptide that is removed on maturation. His-428 serves as a coordination point for Zn(2+). Glu-429 is a catalytic residue. Residue His-432 participates in Zn(2+) binding. The N-linked (GlcNAc...) asparagine glycan is linked to Asn-473.

The protein belongs to the peptidase M36 family. Requires Zn(2+) as cofactor.

Its subcellular location is the secreted. In terms of biological role, secreted metalloproteinase that allows assimilation of proteinaceous substrates. The sequence is that of Extracellular metalloproteinase MEP (MEP) from Pyricularia oryzae (strain 70-15 / ATCC MYA-4617 / FGSC 8958) (Rice blast fungus).